The sequence spans 112 residues: UPF0482 protein SG1468 (112 aa).

Positions 1–22 (MNTIPTRCLLGGLLALSLLAYA) are cleaved as a signal peptide.

Belongs to the UPF0482 family.

In Sodalis glossinidius (strain morsitans), this protein is UPF0482 protein SG1468.